A 790-amino-acid chain; its full sequence is IQ motif and ubiquitin-like domain-containing protein (790 aa).

A compositionally biased stretch (polar residues) spans 1-17; that stretch reads MSNQPKKYETQNIANST. The segment at 1–49 is disordered; the sequence is MSNQPKKYETQNIANSTEESDAFDIVTIPVPSEEPQESDQTEEHESGIE. The region spanning 130–206 is the Ubiquitin-like domain; the sequence is ATVKVVLIPV…IQVEIFSTNP (77 aa). In terms of domain architecture, IQ spans 337–366; sequence RLKAVIVIQTYYRQWHAKIFVEDLRRQKSL.

Component of the axonemal radial spoke 1 (RS1) complex, at least composed of spoke head proteins RSPH1, RSPH3, RSPH9 and the cilia-specific component RSPH4A or sperm-specific component RSPH6A, spoke stalk proteins RSPH14, DNAJB13, DYDC1, ROPN1L and NME5, and the anchor protein IQUB. Does not appear to be part of radial spoke complexes 2 or 3 (RS2 or RS3). Interacts with CALM1. Interacts with DNAJB13. Interacts with DYNLL2. Interacts with NME5. Interacts with RSPH3. Interacts with RSPH9. Interacts with ZMYND10. Interacts with calmodulin; the interaction occurs in conditions of low but not high calcium.

Its subcellular location is the cytoplasm. The protein localises to the cytoskeleton. The protein resides in the flagellum axoneme. It is found in the cell projection. It localises to the cilium. Its function is as follows. Adapter protein that anchors the radial spoke 1 (RS1) complex to the A microtubule of outer doublet microtubules in axonemes. The triple radial spokes (RS1, RS2 and RS3) are required to modulate beating of the sperm flagellum. May play a role in inhibiting signaling via MAPK1/ERK2 and MAPK3/ERK1. Additionally, may play a role in the functioning of cilia. Not required for the functioning of tracheal or ependymal cilia. This Macaca fascicularis (Crab-eating macaque) protein is IQ motif and ubiquitin-like domain-containing protein (IQUB).